The following is a 325-amino-acid chain: tRNA N6-adenosine threonylcarbamoyltransferase (325 aa).

2 residues coordinate Fe cation: His-110 and His-114. Substrate-binding positions include 133 to 137 (MVSGG), Asp-165, Gly-178, and Asn-268. Residue Asp-296 participates in Fe cation binding.

The protein belongs to the KAE1 / TsaD family. The cofactor is Fe(2+).

The protein resides in the cytoplasm. The enzyme catalyses L-threonylcarbamoyladenylate + adenosine(37) in tRNA = N(6)-L-threonylcarbamoyladenosine(37) in tRNA + AMP + H(+). In terms of biological role, required for the formation of a threonylcarbamoyl group on adenosine at position 37 (t(6)A37) in tRNAs that read codons beginning with adenine. Is involved in the transfer of the threonylcarbamoyl moiety of threonylcarbamoyl-AMP (TC-AMP) to the N6 group of A37, together with TsaE and TsaB. TsaD likely plays a direct catalytic role in this reaction. This Thermosipho melanesiensis (strain DSM 12029 / CIP 104789 / BI429) protein is tRNA N6-adenosine threonylcarbamoyltransferase.